A 174-amino-acid chain; its full sequence is Shikimate kinase 2 (174 aa).

Residue glycine 12–threonine 17 participates in ATP binding. Residues threonine 16 and aspartate 32 each contribute to the Mg(2+) site. Aspartate 34, arginine 58, and glycine 79 together coordinate substrate. The tract at residues methionine 112–lysine 126 is LID domain. ATP is bound at residue arginine 120. Arginine 139 serves as a coordination point for substrate.

This sequence belongs to the shikimate kinase family. AroL subfamily. In terms of assembly, monomer. The cofactor is Mg(2+).

The protein localises to the cytoplasm. It carries out the reaction shikimate + ATP = 3-phosphoshikimate + ADP + H(+). It functions in the pathway metabolic intermediate biosynthesis; chorismate biosynthesis; chorismate from D-erythrose 4-phosphate and phosphoenolpyruvate: step 5/7. Catalyzes the specific phosphorylation of the 3-hydroxyl group of shikimic acid using ATP as a cosubstrate. The polypeptide is Shikimate kinase 2 (Photorhabdus laumondii subsp. laumondii (strain DSM 15139 / CIP 105565 / TT01) (Photorhabdus luminescens subsp. laumondii)).